Reading from the N-terminus, the 501-residue chain is AKT kinase-transforming protein (501 aa).

The region spanning 26–129 (AIVKEGWLHK…WATAIQTVAD (104 aa)) is the PH domain. Residues 135–158 (EEETMDFRSGSPSDNSGAEEMEVS) are disordered. Residues 171–429 (FEYLKLLGKG…AKEIMQHRFF (259 aa)) form the Protein kinase domain. ATP contacts are provided by residues 177-185 (LGKGTFGKV) and Lys200. Asp295 serves as the catalytic Proton acceptor. The residue at position 347 (Tyr347) is a Phosphotyrosine. Residues 430–501 (ANIVWQDVYE…QFSYSASGTA (72 aa)) enclose the AGC-kinase C-terminal domain. The interval 471 to 501 (TPPDQDDSMECVDSERRPHFPQFSYSASGTA) is disordered.

This sequence belongs to the protein kinase superfamily. AGC Ser/Thr protein kinase family. RAC subfamily. As to quaternary structure, interacts with mouse THEM4. Autophosphorylated on threonine and serine residues.

The catalysed reaction is L-seryl-[protein] + ATP = O-phospho-L-seryl-[protein] + ADP + H(+). The enzyme catalyses L-threonyl-[protein] + ATP = O-phospho-L-threonyl-[protein] + ADP + H(+). This chain is AKT kinase-transforming protein (V-AKT), found in Mus musculus (Mouse).